The chain runs to 549 residues: Chaperonin GroEL (549 aa).

Residues 30–33 (TLGP), lysine 51, 87–91 (DGTTT), glycine 415, 479–481 (NAA), and aspartate 495 each bind ATP.

Belongs to the chaperonin (HSP60) family. In terms of assembly, forms a cylinder of 14 subunits composed of two heptameric rings stacked back-to-back. Interacts with the co-chaperonin GroES.

It localises to the cytoplasm. The catalysed reaction is ATP + H2O + a folded polypeptide = ADP + phosphate + an unfolded polypeptide.. Functionally, together with its co-chaperonin GroES, plays an essential role in assisting protein folding. The GroEL-GroES system forms a nano-cage that allows encapsulation of the non-native substrate proteins and provides a physical environment optimized to promote and accelerate protein folding. The sequence is that of Chaperonin GroEL from Leptothrix cholodnii (strain ATCC 51168 / LMG 8142 / SP-6) (Leptothrix discophora (strain SP-6)).